We begin with the raw amino-acid sequence, 619 residues long: Putative zinc transporter At3g08650 (619 aa).

15 consecutive transmembrane segments (helical) span residues 25–45 (MMHS…VVFI), 102–122 (VALF…PFFF), 129–149 (WAGI…FDLV), 155–175 (HGSG…IWLC), 198–218 (VVLV…GVGV), 230–250 (LLVT…VSMV), 261–281 (AMLW…PAFL), 289–309 (FLPF…IAEV), 354–374 (GFFV…FLVA), 383–403 (HALL…WRPL), 405–425 (LLLS…IGAG), 465–485 (LLAC…LGVA), 528–548 (AAAL…LAGI), 552–572 (GLDH…WQVI), and 585–605 (VGMV…RLVC).

This sequence belongs to the ZIP transporter (TC 2.A.5) family. ZupT subfamily.

The protein localises to the membrane. Functionally, may transport zinc. The protein is Putative zinc transporter At3g08650 of Arabidopsis thaliana (Mouse-ear cress).